The chain runs to 501 residues: NAD(P)H-quinone oxidoreductase chain 4, chloroplastic (501 aa).

Transmembrane regions (helical) follow at residues 4–24 (FPWLTIIVVLPISAGSLILFL), 35–55 (YTICICILELLITTYAFCYHF), 84–104 (GLSIGPILLTGFITTLATLAA), 111–129 (SRLLHLLMLAMYSGQIGSF), 134–154 (LLLFFIMWELELIPVYLLLSM), 168–188 (FILYTAGGSIFLLMGVLGMDL), 209–229 (ALEILFYFGFIIAFAVKSPII), 243–263 (HYSTCMLLAGILLKMGAYGLI), 273–293 (AHSIFSPWLVIVGTMQIIYAA), 306–326 (IAYSSVSHMGFIIIGIGSITD), 331–351 (GAILQIISHGFIGAALFFLAG), 387–407 (LALPGMSGFVAELIVFFGIIT), 417–437 (ILITFVMAIGMILTPIYSLSM), and 463–483 (LFVSISIFLPVIGIGIYPDFV).

It belongs to the complex I subunit 4 family.

The protein resides in the plastid. It is found in the chloroplast thylakoid membrane. The enzyme catalyses a plastoquinone + NADH + (n+1) H(+)(in) = a plastoquinol + NAD(+) + n H(+)(out). The catalysed reaction is a plastoquinone + NADPH + (n+1) H(+)(in) = a plastoquinol + NADP(+) + n H(+)(out). The chain is NAD(P)H-quinone oxidoreductase chain 4, chloroplastic from Buxus microphylla (Littleleaf boxwood).